Consider the following 55-residue polypeptide: uncharacterized protein (55 aa).

Positions 1-30 (MDKPTVETSAAPVETLVLTEPPAETQAEDS) are disordered.

This is an uncharacterized protein from Frog virus 3 (isolate Goorha) (FV-3).